Consider the following 100-residue polypeptide: NADH-quinone oxidoreductase subunit K 2 (100 aa).

Transmembrane regions (helical) follow at residues 4–24 (LWWSILLGVALFVIGAGGVLL), 28–48 (ILIVLMSLELLLNSVNINFIA), and 60–80 (IFAIFVIAITAAEVAVALGIL).

This sequence belongs to the complex I subunit 4L family. In terms of assembly, NDH-1 is composed of 14 different subunits. Subunits NuoA, H, J, K, L, M, N constitute the membrane sector of the complex.

Its subcellular location is the cell inner membrane. The catalysed reaction is a quinone + NADH + 5 H(+)(in) = a quinol + NAD(+) + 4 H(+)(out). In terms of biological role, NDH-1 shuttles electrons from NADH, via FMN and iron-sulfur (Fe-S) centers, to quinones in the respiratory chain. The immediate electron acceptor for the enzyme in this species is believed to be ubiquinone. Couples the redox reaction to proton translocation (for every two electrons transferred, four hydrogen ions are translocated across the cytoplasmic membrane), and thus conserves the redox energy in a proton gradient. The chain is NADH-quinone oxidoreductase subunit K 2 from Rhizobium meliloti (strain 1021) (Ensifer meliloti).